We begin with the raw amino-acid sequence, 367 residues long: C-glycoside deglycosidase alpha subunit (367 aa).

Glu-146 lines the Mg(2+) pocket. The Proton acceptor role is filled by His-148. Asp-178, His-276, and Glu-312 together coordinate Mg(2+).

This sequence belongs to the C-glycoside deglycosidase alpha subunit family. Heterodimer composed of an alpha subunit (CarB1) and a beta subunit (CarC1). Requires Mg(2+) as cofactor.

The enzyme catalyses 3''-dehydroisovitexin = 1,5-anhydro-D-erythro-hex-1-en-3-ulose + apigenin. With respect to regulation, activity is strongly reduced in the presence of chelating agents. In terms of biological role, carbon-carbon bond-cleaving enzyme which participates in the metabolism of C-glycosides. Acts on the C6-glycosylated compound 3''-dehydroisovitexin (3''-oxo-isovitexin). Shows weak activity with 3''-dehydroisoorientin (3''-oxo-homoorientin) and 3'-dehydromangiferin (3'-oxo-mangiferin). The polypeptide is C-glycoside deglycosidase alpha subunit (Arthrobacter globiformis (strain ATCC 8010 / DSM 20124 / JCM 1332 / NBRC 12137 / NCIMB 8907 / NRRL B-2979 / 168)).